Consider the following 153-residue polypeptide: Ribosome maturation factor RimP (153 aa).

The protein belongs to the RimP family.

The protein resides in the cytoplasm. Its function is as follows. Required for maturation of 30S ribosomal subunits. In Clostridium botulinum (strain 657 / Type Ba4), this protein is Ribosome maturation factor RimP.